The primary structure comprises 766 residues: BMP/retinoic acid-inducible neural-specific protein 3 (766 aa).

Positions 1–33 (MIWRRRAGAELSSLMALWEWIVLSLHCWVLAVA) are cleaved as a signal peptide. The MACPF domain occupies 74–264 (RYKIYREFGR…FVQAALSYIA (191 aa)). N-linked (GlcNAc...) asparagine glycosylation is found at Asn168, Asn337, Asn456, Asn562, Asn609, and Asn641.

This sequence belongs to the BRINP family. Expressed in olfactory bulb, cerebellum and neuronal layers in hippocampus.

It is found in the secreted. The protein localises to the mitochondrion. Inhibits neuronal cell proliferation by negative regulation of the cell cycle transition. Promotes pituitary gonadotrope cell proliferation, migration and invasion, when overexpressed. May play a role in cell pituitary tumor development. The chain is BMP/retinoic acid-inducible neural-specific protein 3 (Brinp3) from Rattus norvegicus (Rat).